The primary structure comprises 330 residues: Type II methyltransferase M.MthTI (330 aa).

Residues 3–328 (MDIASFFSGA…KKIKKDLEGV (326 aa)) form the SAM-dependent MTase C5-type domain. C73 is an active-site residue.

This sequence belongs to the class I-like SAM-binding methyltransferase superfamily. C5-methyltransferase family.

It carries out the reaction a 2'-deoxycytidine in DNA + S-adenosyl-L-methionine = a 5-methyl-2'-deoxycytidine in DNA + S-adenosyl-L-homocysteine + H(+). Functionally, a methylase that recognizes the double-stranded sequence 5'-GGCC-3', methylates C-3 on both strands, and protects the DNA from cleavage by the MthTI endonuclease. The protein is Type II methyltransferase M.MthTI (mthTIM) of Methanothermobacter thermautotrophicus (Methanobacterium thermoformicicum).